Here is a 210-residue protein sequence, read N- to C-terminus: MISFLDKAVLQFDRALQTLVPHAAKATRPSPANTLEEAELDQVERKHSSGLMRINHTGEVCAQALYAGQATTAKLATVRQEMEHAADEEIDHLVWCEQRLYDLGSKPSILNPLFYGASFMIGAGAGFISDKLSLGFVAATEDQVCIHLQKHMAALPMQDAKSKAVLTQMHIDEAKHKAMALEAGGYEFPQPIMAIMTQVSKVMTITTYRI.

Residues Glu-59, Glu-89, His-92, Glu-141, Glu-173, and His-176 each coordinate Fe cation.

Belongs to the COQ7 family. Fe cation is required as a cofactor.

The protein localises to the cell membrane. The catalysed reaction is a 5-methoxy-2-methyl-3-(all-trans-polyprenyl)benzene-1,4-diol + AH2 + O2 = a 3-demethylubiquinol + A + H2O. Its pathway is cofactor biosynthesis; ubiquinone biosynthesis. In terms of biological role, catalyzes the hydroxylation of 2-nonaprenyl-3-methyl-6-methoxy-1,4-benzoquinol during ubiquinone biosynthesis. This chain is 3-demethoxyubiquinol 3-hydroxylase, found in Marinomonas sp. (strain MWYL1).